Reading from the N-terminus, the 419-residue chain is F-box/FBD/LRR-repeat protein At4g26340 (419 aa).

The F-box domain maps to 1–53; the sequence is MDRISQLSDDLLLQILSFIPGKDVVATSLLSKRWQSLWMLVSELEYDDSYHTG. LRR repeat units follow at residues 55 to 81, 132 to 159, 160 to 185, 187 to 208, 226 to 253, 254 to 284, and 299 to 324; these read YKSF…HLNL, TLRL…HLKT, VDYE…FVER, DQDL…SMID, YLNI…HVDI, TQGV…MCPS, and VVKG…KLID. The region spanning 339–389 is the FBD domain; sequence GWKLPSSVPECLLFSLEAFEWIGYKGRRGDREVATYVLKNAACLRTAKFSP.

This is F-box/FBD/LRR-repeat protein At4g26340 from Arabidopsis thaliana (Mouse-ear cress).